The chain runs to 87 residues: Sec-independent protein translocase protein TatA (87 aa).

A helical transmembrane segment spans residues 1-21 (MGSFSIWHWLIVLLIVVMVFG). Residues 40 to 87 (KDGMKDGSTPEGTPASTTAATPPAGQVTNQQAHAADPGTIDVEAKHKG) are disordered. Over residues 46 to 64 (GSTPEGTPASTTAATPPAG) the composition is skewed to low complexity.

This sequence belongs to the TatA/E family. The Tat system comprises two distinct complexes: a TatABC complex, containing multiple copies of TatA, TatB and TatC subunits, and a separate TatA complex, containing only TatA subunits. Substrates initially bind to the TatABC complex, which probably triggers association of the separate TatA complex to form the active translocon.

It localises to the cell inner membrane. Its function is as follows. Part of the twin-arginine translocation (Tat) system that transports large folded proteins containing a characteristic twin-arginine motif in their signal peptide across membranes. TatA could form the protein-conducting channel of the Tat system. This Paracidovorax citrulli (strain AAC00-1) (Acidovorax citrulli) protein is Sec-independent protein translocase protein TatA.